Here is a 337-residue protein sequence, read N- to C-terminus: 2-ketoarginine methyltransferase (337 aa).

The protein belongs to the 2-ketoarginine methyltransferase family.

It catalyses the reaction 5-guanidino-2-oxopentanoate + S-adenosyl-L-methionine = (3R)-5-guanidino-3-methyl-2-oxopentanoate + S-adenosyl-L-homocysteine + H(+). It participates in antibiotic biosynthesis. Functionally, S-adenosyl-L-methionine-dependent methyltransferase involved in the formation of the rare amino acid 3-methylarginine (MeArg), which is incorporated into the peptidyl nucleoside antibiotic arginomycin. Transfers the methyl group from S-adenosyl-L-methionine into 5-guanidino-2-oxopentanoate acid to yield 5-guanidino-3-methyl-2-oxopentanoate, a precursor of MeArg. This chain is 2-ketoarginine methyltransferase, found in Streptomyces arginensis.